Here is a 407-residue protein sequence, read N- to C-terminus: tRNA (guanine(9)-N1)-methyltransferase (407 aa).

A compositionally biased stretch (basic and acidic residues) spans methionine 1–glycine 19. 2 disordered regions span residues methionine 1–arginine 105 and glutamate 220–glutamate 256. Positions asparagine 20–glutamine 32 are enriched in low complexity. Basic residues predominate over residues leucine 91 to arginine 103. An SAM-dependent MTase TRM10-type domain is found at alanine 120–lysine 356. S-adenosyl-L-methionine-binding positions include leucine 263 to serine 264, glycine 283, aspartate 287 to glutamate 291, cysteine 295, leucine 309, and threonine 321 to leucine 323. The active-site Proton acceptor is aspartate 287. The disordered stretch occupies residues lysine 353–lysine 407. A compositionally biased stretch (acidic residues) spans glutamine 368–lysine 386. Polar residues predominate over residues alanine 394–lysine 407.

Belongs to the class IV-like SAM-binding methyltransferase superfamily. TRM10 family. As to quaternary structure, monomer.

It is found in the cytoplasm. Its subcellular location is the nucleus. It catalyses the reaction guanosine(9) in tRNA + S-adenosyl-L-methionine = N(1)-methylguanosine(9) in tRNA + S-adenosyl-L-homocysteine + H(+). Its function is as follows. S-adenosyl-L-methionine-dependent guanine N(1)-methyltransferase that catalyzes the formation of N(1)-methylguanine at position 9 (m1G9) in cytoplasmic tRNA. This is tRNA (guanine(9)-N1)-methyltransferase from Gibberella zeae (strain ATCC MYA-4620 / CBS 123657 / FGSC 9075 / NRRL 31084 / PH-1) (Wheat head blight fungus).